The sequence spans 297 residues: 6-dehydroglucose reductase (297 aa).

The NADP(+) site is built by tryptophan 20, arginine 21, and aspartate 49. Residue tyrosine 54 is the Proton donor of the active site. The D-glucose site is built by tyrosine 54, lysine 98, histidine 129, and arginine 130. 10 residues coordinate NADP(+): serine 159, asparagine 160, glutamine 181, serine 211, leucine 213, glycine 215, glycine 261, threonine 262, asparagine 263, and arginine 267.

The protein belongs to the aldo/keto reductase family. Homotrimer.

It carries out the reaction D-glucose + NADP(+) = 6-dehydro-D-glucose + NADPH + H(+). Functionally, part of the sulfoquinovose monooxygenase (sulfo-SMO) pathway, a D-sulfoquinovose degradation pathway that enables the complete utilization of all carbons within sulfoquinovose (SQ) with concomitant production of inorganic sulfite. Catalyzes the NADP-dependent reduction of 6-dehydro-D-glucose to D-glucose. Cannot use NADH. In Agrobacterium fabrum (strain C58 / ATCC 33970) (Agrobacterium tumefaciens (strain C58)), this protein is 6-dehydroglucose reductase.